The following is a 193-amino-acid chain: Putative 3-methyladenine DNA glycosylase (193 aa).

The protein belongs to the DNA glycosylase MPG family.

The protein is Putative 3-methyladenine DNA glycosylase of Agrobacterium fabrum (strain C58 / ATCC 33970) (Agrobacterium tumefaciens (strain C58)).